The sequence spans 562 residues: Glutamate--tRNA ligase (562 aa).

A 'HIGH' region motif is present at residues 101-111 (PEPNGYPHIGH).

This sequence belongs to the class-I aminoacyl-tRNA synthetase family. Glutamate--tRNA ligase type 2 subfamily.

Its subcellular location is the cytoplasm. The enzyme catalyses tRNA(Glu) + L-glutamate + ATP = L-glutamyl-tRNA(Glu) + AMP + diphosphate. In terms of biological role, catalyzes the attachment of glutamate to tRNA(Glu) in a two-step reaction: glutamate is first activated by ATP to form Glu-AMP and then transferred to the acceptor end of tRNA(Glu). This Cenarchaeum symbiosum (strain A) protein is Glutamate--tRNA ligase.